Reading from the N-terminus, the 140-residue chain is Glycine cleavage system H protein (140 aa).

The region spanning 22-104 is the Lipoyl-binding domain; the sequence is EVVIGITRFA…YGKGWMLRLK (83 aa). Lysine 63 carries the post-translational modification N6-lipoyllysine.

It belongs to the GcvH family. In terms of assembly, the glycine cleavage system is composed of four proteins: P, T, L and H. Requires (R)-lipoate as cofactor.

In terms of biological role, the glycine cleavage system catalyzes the degradation of glycine. The H protein shuttles the methylamine group of glycine from the P protein to the T protein. In Magnetococcus marinus (strain ATCC BAA-1437 / JCM 17883 / MC-1), this protein is Glycine cleavage system H protein.